The primary structure comprises 76 residues: Exodeoxyribonuclease 7 small subunit (76 aa).

Belongs to the XseB family. In terms of assembly, heterooligomer composed of large and small subunits.

Its subcellular location is the cytoplasm. The enzyme catalyses Exonucleolytic cleavage in either 5'- to 3'- or 3'- to 5'-direction to yield nucleoside 5'-phosphates.. Functionally, bidirectionally degrades single-stranded DNA into large acid-insoluble oligonucleotides, which are then degraded further into small acid-soluble oligonucleotides. In Geotalea daltonii (strain DSM 22248 / JCM 15807 / FRC-32) (Geobacter daltonii), this protein is Exodeoxyribonuclease 7 small subunit.